The chain runs to 846 residues: Patched domain-containing protein 4 (846 aa).

The next 10 helical transmembrane spans lie at 41-61 (HPVF…LSAL), 230-250 (SILA…TATL), 265-285 (GLLG…IFFI), 293-313 (TLLG…FELL), 336-356 (VMVT…MGAS), 373-393 (VSIL…LVFA), 465-485 (PFVV…CLQI), 660-680 (PVLI…FLVI), 686-706 (FWLI…MTLW), and 718-738 (LIYT…TFVL). Residues 233 to 392 (ARSKVLVSLV…FSFFGSCLVF (160 aa)) enclose the SSD domain. N-linked (GlcNAc...) asparagine glycosylation occurs at Asn762. Helical transmembrane passes span 765–785 (SFLI…FTLF) and 787–807 (CLLL…PVFL).

This sequence belongs to the patched family.

It is found in the membrane. Its function is as follows. Could act as a repressor of canonical hedgehog signaling by antagonizing the effects of SMO, as suggested by down-regulation of hedgehog target genes, including GLI1, PTCH1, and PTCH2 in PTCHD4-expressing cells. This Homo sapiens (Human) protein is Patched domain-containing protein 4 (PTCHD4).